We begin with the raw amino-acid sequence, 876 residues long: Monofunctional isopimaradiene synthase, chloroplastic (876 aa).

The transit peptide at 1 to 64 directs the protein to the chloroplast; it reads MAMPSYSSLS…YLRLGSRKII (64 aa). Residues Asp-628, Asp-632, Asn-772, Thr-776, and Glu-780 each coordinate Mg(2+). Residues 628–632 carry the DDXXD motif motif; that stretch reads DDLYD.

The protein belongs to the terpene synthase family. Tpsd subfamily. Mg(2+) serves as cofactor.

The protein resides in the plastid. The protein localises to the chloroplast. It catalyses the reaction (+)-copalyl diphosphate = isopimara-7,15-diene + diphosphate. Its pathway is terpene metabolism; oleoresin biosynthesis. Functionally, involved in defensive oleoresin formation in conifers in response to insect attack or other injury. Involved in diterpene (C20) olefins biosynthesis. Monofunctional enzyme lacking the DXDD motif in the class II active site relevant for the cyclization of geranylgeranyl diphosphate (GGPP). Requires (+)-copalyl diphosphate ((+)-CPP) as substrate, but no activity with GGPP or ent-CPP. Isopimaradiene is the major products of the enzyme followed by sandaracopimaradiene. The sequence is that of Monofunctional isopimaradiene synthase, chloroplastic from Pinus banksiana (Jack pine).